Reading from the N-terminus, the 172-residue chain is Neuropeptide-like protein nlp-8 (172 aa).

The signal sequence occupies residues 1 to 26 (MSQKLLPISPLQLLFLQCLLIGFTAA).

Post-translationally, may be processed by convertase egl-3.

The protein resides in the secreted. In terms of biological role, neuropeptide-like protein. Plays a role in behaviors associated with a sleep-like state induced by stress (SIS), acting in concert with the FARP (FMRFamide related) peptides, flp-13 and flp-24. This is Neuropeptide-like protein nlp-8 from Caenorhabditis elegans.